Consider the following 967-residue polypeptide: Dolichyl-phosphooligosaccharide-protein glycotransferase 1 (967 aa).

The Cytoplasmic segment spans residues 1–21 (MVKTQIKEKKKDEKVTIPLPG). The chain crosses the membrane as a helical span at residues 22–42 (KIKTVLAFLVVLAFAAYGFYI). Residues 43–112 (RHLTAGKYFS…ISIFGYNELE (70 aa)) are Extracellular-facing. The DXD motif 1 signature appears at 53–55 (DPD). Asp55 contributes to the Mn(2+) binding site. Residues 113–133 (AFLLWPPFVGFLSVIGVYLLG) form a helical membrane-spanning segment. The Cytoplasmic segment spans residues 134-135 (RK). The chain crosses the membrane as a helical span at residues 136-156 (VLNEWAGMWGAIILSVLTANF). The Extracellular portion of the chain corresponds to 157 to 165 (SRTFSGNAR). Mn(2+)-binding residues include Arg165 and Asp167. Positions 165-167 (RGD) match the DXD motif 2 motif. Residues 166-186 (GDGPFMMLFTFSAVLMLYYLT) traverse the membrane as a helical segment. The Cytoplasmic segment spans residues 187–193 (EENKNKK). The chain crosses the membrane as a helical span at residues 194–214 (IIWGTLFVLLAGISTAAWNGS). Position 215 (Pro215) is a topological domain, extracellular. The helical transmembrane segment at 216–236 (FGLMVLLGFASFQTIILFIFG) threads the bilayer. Residues 237-247 (KINELREFIKE) are Cytoplasmic-facing. A helical transmembrane segment spans residues 248-268 (YYPAYLGILAISYLLTIPGIG). Position 269 (Lys269) is a topological domain, extracellular. Residues 270–290 (IGGFVRFAFEVFLGLVFLAIV) traverse the membrane as a helical segment. Residues 291–306 (MLYGGKYLNYSDKKHR) are Cytoplasmic-facing. Residues 307-327 (FAVVAVIVIAGFAGAYIYVGP) form a helical membrane-spanning segment. The Extracellular segment spans residues 328–360 (KLFTLMGGAYQSTQVYETVQELAKTDWGDVKVY). A TIXE motif motif is present at residues 345–348 (TVQE). A helical transmembrane segment spans residues 361-381 (YGVEKPNGIVFFLGLVGAMIV). Residues 382–396 (TARYLYKLFKDGRRP) lie on the Cytoplasmic side of the membrane. The helical transmembrane segment at 397–417 (HEELFAITFYVMSIYLLWTAA) threads the bilayer. Position 418 (Arg418) is a topological domain, extracellular. Arg418 is a binding site for a glycophospholipid. Residues 419 to 439 (FLFLASYAIALMSGVFAGYVL) form a helical membrane-spanning segment. Residues 440 to 453 (ETVEKMKESIPIKA) lie on the Cytoplasmic side of the membrane. Residues 454–474 (ALGGVIAIMLLLIPLTHGPLL) form a helical membrane-spanning segment. The Extracellular portion of the chain corresponds to 475–967 (AQSAKSMRTT…LEVSASAPHH (493 aa)). Residues 511 to 513 (WWD) form an interacts with target acceptor peptide in protein substrate region. The WWDYG motif signature appears at 511–515 (WWDYG). Tyr516 lines the a glycophospholipid pocket. The DK motif motif lies at 571 to 578 (DWAKFNAI).

This sequence belongs to the STT3 family. Requires Mn(2+) as cofactor. Mg(2+) is required as a cofactor.

It localises to the cell membrane. The catalysed reaction is an archaeal dolichyl phosphooligosaccharide + [protein]-L-asparagine = an archaeal dolichyl phosphate + a glycoprotein with the oligosaccharide chain attached by N-beta-D-glycosyl linkage to a protein L-asparagine.. It participates in protein modification; protein glycosylation. Functionally, oligosaccharyl transferase (OST) that catalyzes the initial transfer of a defined glycan (ManNAcXyl(2)GlcAMan(2)GalNAc in P.furiosus) from the lipid carrier dolichol-monophosphate to an asparagine residue within an Asn-X-Ser/Thr consensus motif in nascent polypeptide chains, the first step in protein N-glycosylation. This Pyrococcus furiosus (strain ATCC 43587 / DSM 3638 / JCM 8422 / Vc1) protein is Dolichyl-phosphooligosaccharide-protein glycotransferase 1 (aglB1).